Here is a 266-residue protein sequence, read N- to C-terminus: Dihydropteroate synthase (266 aa).

The Pterin-binding domain maps to 12–260 (AAIMGILNVT…DVKANQDIVA (249 aa)). Position 19 (N19) interacts with Mg(2+). (7,8-dihydropterin-6-yl)methyl diphosphate is bound by residues T59, D93, N112, D176, K212, and 248–250 (RVH).

It belongs to the DHPS family. Homodimer or homotrimer. It depends on Mg(2+) as a cofactor.

The enzyme catalyses (7,8-dihydropterin-6-yl)methyl diphosphate + 4-aminobenzoate = 7,8-dihydropteroate + diphosphate. The protein operates within cofactor biosynthesis; tetrahydrofolate biosynthesis; 7,8-dihydrofolate from 2-amino-4-hydroxy-6-hydroxymethyl-7,8-dihydropteridine diphosphate and 4-aminobenzoate: step 1/2. Functionally, catalyzes the condensation of para-aminobenzoate (pABA) with 6-hydroxymethyl-7,8-dihydropterin diphosphate (DHPt-PP) to form 7,8-dihydropteroate (H2Pte), the immediate precursor of folate derivatives. The polypeptide is Dihydropteroate synthase (folP) (Streptococcus pyogenes serotype M1).